A 561-amino-acid polypeptide reads, in one-letter code: DNA ligase B (561 aa).

K128 functions as the N6-AMP-lysine intermediate in the catalytic mechanism.

This sequence belongs to the NAD-dependent DNA ligase family. LigB subfamily.

The catalysed reaction is NAD(+) + (deoxyribonucleotide)n-3'-hydroxyl + 5'-phospho-(deoxyribonucleotide)m = (deoxyribonucleotide)n+m + AMP + beta-nicotinamide D-nucleotide.. In terms of biological role, catalyzes the formation of phosphodiester linkages between 5'-phosphoryl and 3'-hydroxyl groups in double-stranded DNA using NAD as a coenzyme and as the energy source for the reaction. The chain is DNA ligase B from Pseudomonas syringae pv. tomato (strain ATCC BAA-871 / DC3000).